A 286-amino-acid chain; its full sequence is MAGAKEIRSKIASIKSTQKITSAMEKVAVSKMRKAQMRMAASRPYAERIRQVIGHLANANPEYRHPFMIDREVKRVGYVVVSSDRGLCGGLNTNLFKALVKDMAVNRENGVEIDLCVVGSKGAAFFRNFGGNVVAAISHLGEEPSINDLIGSVKVMLDAYLDGRIDRLSVVSNKFINTMTQQPTVEQLIPLVATPDQELKHHWDYLYEPDAKELLDGLMVRYVESQVYQAVVENNAAEQAARMIAMKNATDNAGDLISDLQLIYNKARQAAITQEISEIVGGAAAV.

This sequence belongs to the ATPase gamma chain family. As to quaternary structure, F-type ATPases have 2 components, CF(1) - the catalytic core - and CF(0) - the membrane proton channel. CF(1) has five subunits: alpha(3), beta(3), gamma(1), delta(1), epsilon(1). CF(0) has three main subunits: a, b and c.

It localises to the cell inner membrane. Functionally, produces ATP from ADP in the presence of a proton gradient across the membrane. The gamma chain is believed to be important in regulating ATPase activity and the flow of protons through the CF(0) complex. This Pseudomonas fluorescens (strain Pf0-1) protein is ATP synthase gamma chain.